A 426-amino-acid chain; its full sequence is Enolase (426 aa).

Residue Q165 participates in (2R)-2-phosphoglycerate binding. Residue E207 is the Proton donor of the active site. 3 residues coordinate Mg(2+): D244, E285, and D312. The (2R)-2-phosphoglycerate site is built by K337, R366, S367, and K388. K337 serves as the catalytic Proton acceptor.

Belongs to the enolase family. Requires Mg(2+) as cofactor.

The protein localises to the cytoplasm. The protein resides in the secreted. It is found in the cell surface. It catalyses the reaction (2R)-2-phosphoglycerate = phosphoenolpyruvate + H2O. The protein operates within carbohydrate degradation; glycolysis; pyruvate from D-glyceraldehyde 3-phosphate: step 4/5. Catalyzes the reversible conversion of 2-phosphoglycerate (2-PG) into phosphoenolpyruvate (PEP). It is essential for the degradation of carbohydrates via glycolysis. This Cyanothece sp. (strain PCC 7425 / ATCC 29141) protein is Enolase.